Consider the following 102-residue polypeptide: Aspartyl/glutamyl-tRNA(Asn/Gln) amidotransferase subunit C (102 aa).

The protein belongs to the GatC family. In terms of assembly, heterotrimer of A, B and C subunits.

The enzyme catalyses L-glutamyl-tRNA(Gln) + L-glutamine + ATP + H2O = L-glutaminyl-tRNA(Gln) + L-glutamate + ADP + phosphate + H(+). It catalyses the reaction L-aspartyl-tRNA(Asn) + L-glutamine + ATP + H2O = L-asparaginyl-tRNA(Asn) + L-glutamate + ADP + phosphate + 2 H(+). Functionally, allows the formation of correctly charged Asn-tRNA(Asn) or Gln-tRNA(Gln) through the transamidation of misacylated Asp-tRNA(Asn) or Glu-tRNA(Gln) in organisms which lack either or both of asparaginyl-tRNA or glutaminyl-tRNA synthetases. The reaction takes place in the presence of glutamine and ATP through an activated phospho-Asp-tRNA(Asn) or phospho-Glu-tRNA(Gln). In Mycobacteroides abscessus (strain ATCC 19977 / DSM 44196 / CCUG 20993 / CIP 104536 / JCM 13569 / NCTC 13031 / TMC 1543 / L948) (Mycobacterium abscessus), this protein is Aspartyl/glutamyl-tRNA(Asn/Gln) amidotransferase subunit C.